Here is a 317-residue protein sequence, read N- to C-terminus: 17-beta-hydroxysteroid dehydrogenase type 6 (317 aa).

Residues 1–17 form the signal peptide; the sequence is MWFYLVTLVGLYHLLRW. 33–57 provides a ligand contact to NAD(+); that stretch reads FITGCDSGFGNLLARQLDRRGMRVL. Residues N71 and N161 are each glycosylated (N-linked (GlcNAc...) asparagine). S164 provides a ligand contact to substrate. The active-site Proton acceptor is the Y176.

It belongs to the short-chain dehydrogenases/reductases (SDR) family. Detected in liver.

The protein resides in the microsome membrane. The protein localises to the early endosome membrane. It catalyses the reaction all-trans-retinol--[retinol-binding protein] + NAD(+) = all-trans-retinal--[retinol-binding protein] + NADH + H(+). The catalysed reaction is all-trans-retinol + NAD(+) = all-trans-retinal + NADH + H(+). The enzyme catalyses androsterone + NAD(+) = 5alpha-androstan-3,17-dione + NADH + H(+). It carries out the reaction testosterone + NAD(+) = androst-4-ene-3,17-dione + NADH + H(+). It catalyses the reaction 5alpha-androstane-3alpha,17beta-diol + NAD(+) = 17beta-hydroxy-5alpha-androstan-3-one + NADH + H(+). The catalysed reaction is 17beta-estradiol + NAD(+) = estrone + NADH + H(+). The enzyme catalyses 17beta-estradiol + NADP(+) = estrone + NADPH + H(+). It carries out the reaction 3alpha-hydroxy-5alpha-pregnan-20-one + NAD(+) = 5alpha-pregnane-3,20-dione + NADH + H(+). It catalyses the reaction 5alpha-androstane-3beta,17beta-diol + NAD(+) = 17beta-hydroxy-5alpha-androstan-3-one + NADH + H(+). The catalysed reaction is 3beta-hydroxy-5alpha-androstan-17-one + NAD(+) = 5alpha-androstan-3,17-dione + NADH + H(+). Inhibited by carbenoxolone and phenyl arsenoxide. Its function is as follows. NAD-dependent oxidoreductase with broad substrate specificity that shows both oxidative and reductive activity (in vitro). Has 17-beta-hydroxysteroid dehydrogenase activity towards various steroids (in vitro). Converts 5-alpha-androstan-3-alpha,17-beta-diol to androsterone and estradiol to estrone (in vitro). Has 3-alpha-hydroxysteroid dehydrogenase activity towards androsterone (in vitro). Has retinol dehydrogenase activity towards all-trans-retinol (in vitro). This chain is 17-beta-hydroxysteroid dehydrogenase type 6 (Hsd17b6), found in Mus musculus (Mouse).